Here is a 364-residue protein sequence, read N- to C-terminus: Probable G-protein coupled receptor AH9.4 (364 aa).

Position 1 (Met1) is a topological domain, extracellular. Residues 2–22 (AFLQSAYLVMVFTVPIAGVIL) form a helical membrane-spanning segment. Residues 23–48 (NTYVLRKLIRVARKSVVRFETTSGLP) lie on the Cytoplasmic side of the membrane. A helical membrane pass occupies residues 49–69 (LAAMSVGDSITLCALLMQAIF). The Extracellular portion of the chain corresponds to 70-89 (HITPKGEVPTVVLSSICKFG). Residues 90–110 (IFLIHSTSAFSVWCWFFLSVL) form a helical membrane-spanning segment. Over 111–130 (RYIAVFHPFKYRTIWRQPRN) the chain is Cytoplasmic. Residues 131–151 (ALKFLAGAVGMFQIYTLIFVT) traverse the membrane as a helical segment. The Extracellular portion of the chain corresponds to 152–177 (YRQEEKSCGEYDVFHESAFKHVHLLD). Residues 178-198 (IFLFYAIPSLLRITLDFLVLI) form a helical membrane-spanning segment. Residues 199–277 (HCYSPFSVEG…KKKTAMVMRS (79 aa)) lie on the Cytoplasmic side of the membrane. A helical membrane pass occupies residues 278-298 (ILISVLNLLLNLPSHIFRAWA). The Extracellular portion of the chain corresponds to 299 to 315 (SYDESSLENEIVRTLEP). A helical transmembrane segment spans residues 316–336 (IAQMMYFSQFACNAFYLATSI). Over 337–364 (YETNGSPRNTVISSSNRHVSRCISDDEA) the chain is Cytoplasmic.

Belongs to the G-protein coupled receptor 1 family.

It is found in the cell membrane. Its function is as follows. Not known. Putative receptor. The sequence is that of Probable G-protein coupled receptor AH9.4 from Caenorhabditis elegans.